We begin with the raw amino-acid sequence, 172 residues long: Peptide methionine sulfoxide reductase MsrA (172 aa).

Residue C14 is part of the active site.

It belongs to the MsrA Met sulfoxide reductase family.

The enzyme catalyses L-methionyl-[protein] + [thioredoxin]-disulfide + H2O = L-methionyl-(S)-S-oxide-[protein] + [thioredoxin]-dithiol. The catalysed reaction is [thioredoxin]-disulfide + L-methionine + H2O = L-methionine (S)-S-oxide + [thioredoxin]-dithiol. Functionally, has an important function as a repair enzyme for proteins that have been inactivated by oxidation. Catalyzes the reversible oxidation-reduction of methionine sulfoxide in proteins to methionine. The chain is Peptide methionine sulfoxide reductase MsrA from Streptomyces coelicolor (strain ATCC BAA-471 / A3(2) / M145).